A 23-amino-acid polypeptide reads, in one-letter code: Mu-conotoxin-like SxIIIB (23 aa).

Q1 is subject to Pyrrolidone carboxylic acid. Intrachain disulfides connect C3–C16, C4–C21, and C11–C22. At A23 the chain carries Alanine amide.

This sequence belongs to the conotoxin M superfamily. Expressed by the venom duct.

It is found in the secreted. Functionally, mu-conotoxins block voltage-gated sodium channels (Nav). The protein is Mu-conotoxin-like SxIIIB of Conus striolatus (Cone snail).